A 1342-amino-acid chain; its full sequence is DNA-directed RNA polymerase subunit beta (1342 aa).

This sequence belongs to the RNA polymerase beta chain family. The RNAP catalytic core consists of 2 alpha, 1 beta, 1 beta' and 1 omega subunit. When a sigma factor is associated with the core the holoenzyme is formed, which can initiate transcription.

It catalyses the reaction RNA(n) + a ribonucleoside 5'-triphosphate = RNA(n+1) + diphosphate. Functionally, DNA-dependent RNA polymerase catalyzes the transcription of DNA into RNA using the four ribonucleoside triphosphates as substrates. This chain is DNA-directed RNA polymerase subunit beta, found in Tolumonas auensis (strain DSM 9187 / NBRC 110442 / TA 4).